We begin with the raw amino-acid sequence, 72 residues long: Phosphonoacetate hydrolase (72 aa).

As to quaternary structure, monomer. The cofactor is Unlike bacterial phosphonoacetate hydrolase, does not require zinc as a cofactor..

The catalysed reaction is phosphonoacetate + H2O = acetate + phosphate + H(+). With respect to regulation, unaffected by EDTA or Ca(2+), Co(2+), Cu(2+), Mg(2+), Mn(2+), Ni(2+) and Zn(2+). This Penicillium oxalicum protein is Phosphonoacetate hydrolase.